The chain runs to 162 residues: uncharacterized protein (162 aa).

4 helical membrane-spanning segments follow: residues 15 to 35 (VLAI…APAL), 43 to 63 (VCHF…FDLS), 70 to 90 (LTIL…QSFL), and 97 to 117 (LFDI…NILY).

Its subcellular location is the membrane. This is an uncharacterized protein from Schizosaccharomyces pombe (strain 972 / ATCC 24843) (Fission yeast).